The primary structure comprises 293 residues: DNA-directed RNA polymerase III subunit rpc6 (293 aa).

Belongs to the eukaryotic RPC34/RPC39 RNA polymerase subunit family. As to quaternary structure, component of the RNA polymerase III (Pol III) complex.

The protein resides in the nucleus. DNA-dependent RNA polymerase catalyzes the transcription of DNA into RNA using the four ribonucleoside triphosphates as substrates. Specific peripheric component of RNA polymerase III which synthesizes small RNAs, such as 5S rRNA and tRNAs. May direct RNA Pol III binding to the TFIIIB-DNA complex. The sequence is that of DNA-directed RNA polymerase III subunit rpc6 (polr3f) from Dictyostelium discoideum (Social amoeba).